The following is a 330-amino-acid chain: Small ribosomal subunit protein uS2 (330 aa).

This sequence belongs to the universal ribosomal protein uS2 family.

This is Small ribosomal subunit protein uS2 from Rhodopseudomonas palustris (strain BisA53).